A 447-amino-acid chain; its full sequence is Imidazolonepropionase (447 aa).

Positions 85 and 87 each coordinate Fe(3+). Positions 85 and 87 each coordinate Zn(2+). The 4-imidazolone-5-propanoate site is built by arginine 94, tyrosine 157, and histidine 190. Position 157 (tyrosine 157) interacts with N-formimidoyl-L-glutamate. Histidine 255 lines the Fe(3+) pocket. Histidine 255 is a binding site for Zn(2+). A 4-imidazolone-5-propanoate-binding site is contributed by glutamate 258. Aspartate 329 is a Fe(3+) binding site. Zn(2+) is bound at residue aspartate 329. The N-formimidoyl-L-glutamate site is built by asparagine 331 and glycine 333. Serine 334 serves as a coordination point for 4-imidazolone-5-propanoate.

It belongs to the metallo-dependent hydrolases superfamily. HutI family. Zn(2+) is required as a cofactor. Fe(3+) serves as cofactor.

The protein localises to the cytoplasm. The catalysed reaction is 4-imidazolone-5-propanoate + H2O = N-formimidoyl-L-glutamate. It participates in amino-acid degradation; L-histidine degradation into L-glutamate; N-formimidoyl-L-glutamate from L-histidine: step 3/3. Catalyzes the hydrolytic cleavage of the carbon-nitrogen bond in imidazolone-5-propanoate to yield N-formimidoyl-L-glutamate. It is the third step in the universal histidine degradation pathway. The polypeptide is Imidazolonepropionase (Shouchella clausii (strain KSM-K16) (Alkalihalobacillus clausii)).